We begin with the raw amino-acid sequence, 275 residues long: Collectin-10 (275 aa).

The N-terminal stretch at 1-25 is a signal peptide; that stretch reads MKYGKLWPIGVSVLGVIALHVRVLS. N30 is a glycosylation site (N-linked (GlcNAc...) asparagine). The segment at 39-76 is disordered; the sequence is THTILPGPKGDDGEAGDTGVLGKLGKDGPKGQKGNKGI. The Collagen-like domain occupies 51 to 110; sequence GEAGDTGVLGKLGKDGPKGQKGNKGIIGDSGDLGLIGKIGPIGSKGDKGHKGLPGLPGGK. A C-type lectin domain is found at 153-269; that stretch reads TDEKYYYIVR…CSLTIYFVCE (117 aa). 2 disulfide bridges follow: C174–C268 and C246–C260.

Belongs to the COLEC10/COLEC11 family.

Its subcellular location is the secreted. Lectin that binds to various sugars: galactose &gt; mannose = fucose &gt; N-acetylglucosamine &gt; N-acetylgalactosamine. The chain is Collectin-10 (colec10) from Xenopus tropicalis (Western clawed frog).